Here is a 277-residue protein sequence, read N- to C-terminus: Elongation factor Ts (277 aa).

The interval 79 to 82 (TDFV) is involved in Mg(2+) ion dislocation from EF-Tu.

Belongs to the EF-Ts family.

Its subcellular location is the cytoplasm. Functionally, associates with the EF-Tu.GDP complex and induces the exchange of GDP to GTP. It remains bound to the aminoacyl-tRNA.EF-Tu.GTP complex up to the GTP hydrolysis stage on the ribosome. This Phytoplasma australiense protein is Elongation factor Ts.